Reading from the N-terminus, the 489-residue chain is MRFSLSSADLQEWNGDVLAVGLPQGDVDATATALEQRFAGITDALKQQEFKGKPGDQLVITPLGGGPQRLVVLGLGESDAIDTERLRGAAARAAKAAIGCEGSLGLQLPCAGSDAQEAARICAEAVRLCLYKDQRFRKEPDPRRIPEALELIDLSPAAESGFAAVNATCAGVELARELVAAPPNVVTPAALADTAAGIAKDHGLELKVLERSDCEAKGMGAFLAVSQGSDLPPKFIHLIYRPEGEVKRRVALVGKGLTFDSGGYNLKVGAAQIDMMKFDMGGSAAVLGAMRSIAELKPAGVEVHMVVASCENMVNGSAVHPGDIVMAANGMTIEINNTDAEGRLTLADALLYACEQKPDAVVDLATLTGACVIALGDEMAGLWSNNDDLAEALDAAAQTGGEGLWRMPLRQSYKDGLKSLLADMKNTGPRPGGSITAALFLKEFVAKDTAWAHIDIAGPVWSDKGKGVNPAGATGYGVRTLVNWVLAQS.

The Mn(2+) site is built by K255 and D260. Residue K267 is part of the active site. Residues D279, D339, and E341 each contribute to the Mn(2+) site. The active site involves R343.

It belongs to the peptidase M17 family. Mn(2+) is required as a cofactor.

The protein resides in the cytoplasm. It carries out the reaction Release of an N-terminal amino acid, Xaa-|-Yaa-, in which Xaa is preferably Leu, but may be other amino acids including Pro although not Arg or Lys, and Yaa may be Pro. Amino acid amides and methyl esters are also readily hydrolyzed, but rates on arylamides are exceedingly low.. It catalyses the reaction Release of an N-terminal amino acid, preferentially leucine, but not glutamic or aspartic acids.. Its function is as follows. Presumably involved in the processing and regular turnover of intracellular proteins. Catalyzes the removal of unsubstituted N-terminal amino acids from various peptides. The chain is Probable cytosol aminopeptidase from Synechococcus sp. (strain CC9605).